A 409-amino-acid polypeptide reads, in one-letter code: uncharacterized protein (409 aa).

10 helical membrane passes run 53 to 73, 83 to 103, 115 to 135, 141 to 161, 183 to 203, 205 to 225, 243 to 263, 265 to 285, 299 to 319, and 329 to 349; these read IITL…YVHC, WCYF…NVDG, LGEL…AIVM, IGPY…YLAH, VLFM…WTYG, STTV…VTCL, CLLQ…WASV, NLIT…FGYI, CSLF…SILA, and TVAL…FSYF. Residues 388–401 are compositionally biased toward polar residues; sequence EEGSSSIGNSTDDI. Residues 388–409 form a disordered region; it reads EEGSSSIGNSTDDINPSEIEEI.

Belongs to the CDP-alcohol phosphatidyltransferase class-I family.

The protein localises to the membrane. This is an uncharacterized protein from Dictyostelium discoideum (Social amoeba).